Here is a 294-residue protein sequence, read N- to C-terminus: tRNA dimethylallyltransferase (294 aa).

10–17 provides a ligand contact to ATP; sequence GPTAVGKT. 12–17 is a substrate binding site; the sequence is TAVGKT. The tract at residues 35–38 is interaction with substrate tRNA; that stretch reads DSQQ.

It belongs to the IPP transferase family. In terms of assembly, monomer. Requires Mg(2+) as cofactor.

It carries out the reaction adenosine(37) in tRNA + dimethylallyl diphosphate = N(6)-dimethylallyladenosine(37) in tRNA + diphosphate. Its function is as follows. Catalyzes the transfer of a dimethylallyl group onto the adenine at position 37 in tRNAs that read codons beginning with uridine, leading to the formation of N6-(dimethylallyl)adenosine (i(6)A). This is tRNA dimethylallyltransferase from Streptococcus pneumoniae serotype 2 (strain D39 / NCTC 7466).